The following is an 879-amino-acid chain: Phosphoenolpyruvate carboxylase (879 aa).

Active-site residues include His-137 and Lys-545.

It belongs to the PEPCase type 1 family. The cofactor is Mg(2+).

It carries out the reaction oxaloacetate + phosphate = phosphoenolpyruvate + hydrogencarbonate. Forms oxaloacetate, a four-carbon dicarboxylic acid source for the tricarboxylic acid cycle. The chain is Phosphoenolpyruvate carboxylase from Yersinia enterocolitica serotype O:8 / biotype 1B (strain NCTC 13174 / 8081).